Here is a 456-residue protein sequence, read N- to C-terminus: Adenylosuccinate lyase (456 aa).

N(6)-(1,2-dicarboxyethyl)-AMP contacts are provided by residues 15–16, 90–92, and 122–123; these read RY, NHD, and TS. Residue His171 is the Proton donor/acceptor of the active site. N(6)-(1,2-dicarboxyethyl)-AMP is bound at residue Gln247. Ser295 (proton donor/acceptor) is an active-site residue. N(6)-(1,2-dicarboxyethyl)-AMP-binding positions include Ser296, 301–303, Asn309, Arg335, and 340–344; these read KVN and STVLR.

Belongs to the lyase 1 family. Adenylosuccinate lyase subfamily. In terms of assembly, homotetramer. Residues from neighboring subunits contribute catalytic and substrate-binding residues to each active site.

The catalysed reaction is N(6)-(1,2-dicarboxyethyl)-AMP = fumarate + AMP. The enzyme catalyses (2S)-2-[5-amino-1-(5-phospho-beta-D-ribosyl)imidazole-4-carboxamido]succinate = 5-amino-1-(5-phospho-beta-D-ribosyl)imidazole-4-carboxamide + fumarate. It participates in purine metabolism; AMP biosynthesis via de novo pathway; AMP from IMP: step 2/2. Its pathway is purine metabolism; IMP biosynthesis via de novo pathway; 5-amino-1-(5-phospho-D-ribosyl)imidazole-4-carboxamide from 5-amino-1-(5-phospho-D-ribosyl)imidazole-4-carboxylate: step 2/2. Its function is as follows. Catalyzes two reactions in de novo purine nucleotide biosynthesis. Catalyzes the breakdown of 5-aminoimidazole- (N-succinylocarboxamide) ribotide (SAICAR or 2-[5-amino-1-(5-phospho-beta-D-ribosyl)imidazole-4-carboxamido]succinate) to 5-aminoimidazole-4-carboxamide ribotide (AICAR or 5-amino-1-(5-phospho-beta-D-ribosyl)imidazole-4-carboxamide) and fumarate, and of adenylosuccinate (ADS or N(6)-(1,2-dicarboxyethyl)-AMP) to adenosine monophosphate (AMP) and fumarate. The protein is Adenylosuccinate lyase (purB) of Legionella pneumophila subsp. pneumophila (strain Philadelphia 1 / ATCC 33152 / DSM 7513).